Here is a 3462-residue protein sequence, read N- to C-terminus: Extracellular matrix-binding protein EbhA (3462 aa).

The segment covering 1 to 19 (MVQQSTTVAEAQGNEQKAN) has biased composition (polar residues). The tract at residues 1–21 (MVQQSTTVAEAQGNEQKANNV) is disordered. 19 FIVAR domains span residues 24–82 (AMDK…INQA), 150–208 (AMGN…VEQA), 276–334 (AMTQ…ITAA), 402–460 (AMTQ…IQQA), 528–586 (AMTN…VEQA), 654–712 (AMTQ…VAQA), 780–838 (AMGT…VTQA), 906–964 (AMSN…ITRA), 1032–1093 (AMDQ…ITNE), 1158–1216 (AMEL…VNGA), 1284–1342 (AMGN…VEQA), 1410–1467 (AMHG…INQA), 1535–1593 (LMDA…VSSA), 1661–1719 (AMEA…VEQL), 1787–1845 (AMQA…VEQL), 1913–1971 (AMET…VDQV), 2039–2093 (SMDQ…VDQA), 2161–2220 (AMDQ…VIKL), and 2415–2471 (AMET…INGA). A helical membrane pass occupies residues 3267–3289 (VIKNAIGVVGISGLLASFWFFIA). Positions 3365 to 3462 (RRKEDEEDVE…KKKKAKKNKK (98 aa)) are disordered. Composition is skewed to basic and acidic residues over residues 3380 to 3390 (TDEKVLKDNEH) and 3429 to 3439 (QKDNQSKDKKS). Residues 3444–3462 (TSKKVAAKKKKKKAKKNKK) are compositionally biased toward basic residues.

It localises to the cell membrane. The protein is Extracellular matrix-binding protein EbhA (ebhA) of Staphylococcus aureus (strain Newman).